We begin with the raw amino-acid sequence, 475 residues long: ADP-ribose glycohydrolase MACROD2 (475 aa).

The Macro domain occupies 59–240; it reads QEAPQMKKSL…IYKKKMNEFF (182 aa). Residues 77–79, 90–92, and 97–102 each bind substrate; these read GDI, AAN, and GGGGVD. Residue Lys-170 forms a Glycyl lysine isopeptide (Lys-Gly) (interchain with G-Cter in ubiquitin) linkage. Residues 185-191 and Phe-224 contribute to the substrate site; that span reads ISTGIYG. Disordered stretches follow at residues 241–306 and 324–475; these read PVDD…SQEA and GVNT…EDLQ. Composition is skewed to basic and acidic residues over residues 251–261 and 335–359; these read ADMKEDSEGPE and SEDK…DSDM. Polar residues predominate over residues 360-375; that stretch reads TNHSVCDQELPNGQEN. The segment covering 376–386 has biased composition (basic and acidic residues); it reads DSAKSEGKTEA. 2 stretches are compositionally biased toward polar residues: residues 387 to 402 and 440 to 469; these read ESPS…SPNQ and SQGS…PTES.

Belongs to the MacroD-type family. MacroD1/2-like subfamily. In terms of assembly, interacts with ADP-ribosylated PARP1. In terms of tissue distribution, expressed in the kidney.

It is found in the nucleus. The catalysed reaction is 2''-O-acetyl-ADP-D-ribose + H2O = ADP-D-ribose + acetate + H(+). The enzyme catalyses 4-O-(ADP-D-ribosyl)-L-aspartyl-[protein] + H2O = L-aspartyl-[protein] + ADP-D-ribose + H(+). It carries out the reaction 5-O-(ADP-D-ribosyl)-L-glutamyl-[protein] + H2O = L-glutamyl-[protein] + ADP-D-ribose + H(+). It catalyses the reaction alpha-NAD(+) + H2O = ADP-D-ribose + nicotinamide + H(+). Its activity is regulated as follows. Subject to product inhibition by ADP-ribose. In terms of biological role, removes ADP-ribose from aspartate and glutamate residues in proteins bearing a single ADP-ribose moiety. Inactive towards proteins bearing poly-ADP-ribose. Deacetylates O-acetyl-ADP ribose, a signaling molecule generated by the deacetylation of acetylated lysine residues in histones and other proteins. The polypeptide is ADP-ribose glycohydrolase MACROD2 (Mus musculus (Mouse)).